The following is a 75-amino-acid chain: Small ribosomal subunit protein bS18 (75 aa).

The protein belongs to the bacterial ribosomal protein bS18 family. In terms of assembly, part of the 30S ribosomal subunit. Forms a tight heterodimer with protein bS6.

Its function is as follows. Binds as a heterodimer with protein bS6 to the central domain of the 16S rRNA, where it helps stabilize the platform of the 30S subunit. In Shewanella denitrificans (strain OS217 / ATCC BAA-1090 / DSM 15013), this protein is Small ribosomal subunit protein bS18.